A 615-amino-acid chain; its full sequence is ATP-dependent zinc metalloprotease FtsH 2 (615 aa).

The Cytoplasmic portion of the chain corresponds to 1-7 (MNEPNRN). Residues 8–28 (FFWIFFLILGIFWLQSVWFGS) form a helical membrane-spanning segment. Residues 29 to 99 (RTVQQIPYSQ…VTYRREIENT (71 aa)) lie on the Periplasmic side of the membrane. A helical membrane pass occupies residues 100–120 (FFRDLLSWVVPALIFVAVFLY). Residues 121–615 (FSRKFAEKGG…APQRERDLSV (495 aa)) are Cytoplasmic-facing. An ATP-binding site is contributed by 195-202 (GPPGTGKT). Residue His-418 participates in Zn(2+) binding. Glu-419 is a catalytic residue. Zn(2+)-binding residues include His-422 and Asp-495.

In the central section; belongs to the AAA ATPase family. The protein in the C-terminal section; belongs to the peptidase M41 family. As to quaternary structure, homohexamer. It depends on Zn(2+) as a cofactor.

It localises to the cell inner membrane. Functionally, acts as a processive, ATP-dependent zinc metallopeptidase for both cytoplasmic and membrane proteins. Plays a role in the quality control of integral membrane proteins. The polypeptide is ATP-dependent zinc metalloprotease FtsH 2 (Bdellovibrio bacteriovorus (strain ATCC 15356 / DSM 50701 / NCIMB 9529 / HD100)).